The chain runs to 160 residues: Cytochrome b6-f complex subunit 4 (160 aa).

The next 3 membrane-spanning stretches (helical) occupy residues 36–56 (LLYV…GLAV), 95–115 (LLGV…PFIE), and 131–151 (LVFI…CLPI).

Belongs to the cytochrome b family. PetD subfamily. As to quaternary structure, the 4 large subunits of the cytochrome b6-f complex are cytochrome b6, subunit IV (17 kDa polypeptide, petD), cytochrome f and the Rieske protein, while the 4 small subunits are petG, petL, petM and petN. The complex functions as a dimer.

The protein localises to the plastid. It localises to the chloroplast thylakoid membrane. In terms of biological role, component of the cytochrome b6-f complex, which mediates electron transfer between photosystem II (PSII) and photosystem I (PSI), cyclic electron flow around PSI, and state transitions. This chain is Cytochrome b6-f complex subunit 4, found in Trieres chinensis (Marine centric diatom).